The sequence spans 286 residues: CDP-diacylglycerol--serine O-phosphatidyltransferase (286 aa).

Helical transmembrane passes span 15–35 (ILPSAMTVLSICAGLTAIKFA), 74–94 (IDSLADAVNFGVTPALVLYVS), 95–115 (MLSKWPVGWVVVLLYAVCVVL), 135–155 (EFFVGMPAPAGAVSMIGLLAL), 167–187 (GWFLSFWVTGTSILLVSGIPM), and 207–227 (LAICAAAAVLAPYLLIWVIII).

It belongs to the CDP-alcohol phosphatidyltransferase class-I family.

The protein localises to the cell membrane. The catalysed reaction is a CDP-1,2-diacyl-sn-glycerol + L-serine = a 1,2-diacyl-sn-glycero-3-phospho-L-serine + CMP + H(+). This Mycobacterium tuberculosis (strain ATCC 25618 / H37Rv) protein is CDP-diacylglycerol--serine O-phosphatidyltransferase (pssA).